Consider the following 84-residue polypeptide: ATP synthase subunit c (84 aa).

Transmembrane regions (helical) follow at residues 9 to 29 and 54 to 74; these read IFGS…GFSL and IVAG…LLFI.

The protein belongs to the ATPase C chain family. As to quaternary structure, F-type ATPases have 2 components, F(1) - the catalytic core - and F(0) - the membrane proton channel. F(1) has five subunits: alpha(3), beta(3), gamma(1), delta(1), epsilon(1). F(0) has three main subunits: a(1), b(2) and c(10-14). The alpha and beta chains form an alternating ring which encloses part of the gamma chain. F(1) is attached to F(0) by a central stalk formed by the gamma and epsilon chains, while a peripheral stalk is formed by the delta and b chains.

The protein localises to the cell inner membrane. Functionally, f(1)F(0) ATP synthase produces ATP from ADP in the presence of a proton or sodium gradient. F-type ATPases consist of two structural domains, F(1) containing the extramembraneous catalytic core and F(0) containing the membrane proton channel, linked together by a central stalk and a peripheral stalk. During catalysis, ATP synthesis in the catalytic domain of F(1) is coupled via a rotary mechanism of the central stalk subunits to proton translocation. Key component of the F(0) channel; it plays a direct role in translocation across the membrane. A homomeric c-ring of between 10-14 subunits forms the central stalk rotor element with the F(1) delta and epsilon subunits. This is ATP synthase subunit c from Histophilus somni (strain 129Pt) (Haemophilus somnus).